We begin with the raw amino-acid sequence, 252 residues long: Flap endonuclease Xni (252 aa).

Aspartate 105 contacts Mg(2+). Positions 162–250 (ERTQFIDYLA…LNANLSQFRL (89 aa)) constitute a 5'-3' exonuclease domain. Leucine 172, alanine 173, proline 181, valine 183, and isoleucine 186 together coordinate K(+). The segment at 185–190 (GIGPKS) is interaction with DNA.

Belongs to the Xni family. Mg(2+) is required as a cofactor. The cofactor is K(+).

In terms of biological role, has flap endonuclease activity. During DNA replication, flap endonucleases cleave the 5'-overhanging flap structure that is generated by displacement synthesis when DNA polymerase encounters the 5'-end of a downstream Okazaki fragment. The chain is Flap endonuclease Xni from Shewanella woodyi (strain ATCC 51908 / MS32).